A 292-amino-acid polypeptide reads, in one-letter code: 31 kDa ribonucleoprotein, chloroplastic (292 aa).

In terms of domain architecture, RRM 1 spans 88–166 (LKLFVGNLPF…RAIRVNAGPA (79 aa)). The segment at 165–203 (PAPAKRENSSFGGGRGGNSSYGGGRDGNSSFGGARGGRS) is disordered. The interval 167–207 (PAKRENSSFGGGRGGNSSYGGGRDGNSSFGGARGGRSVDSS) is linker (Gly-rich). Over residues 175–190 (FGGGRGGNSSYGGGRD) the composition is skewed to gly residues. Positions 208 to 286 (NRVYVGNLSW…RSIRVSAAEE (79 aa)) constitute an RRM 2 domain.

Expressed at high levels in the leaves and seedlings, and lower levels are seen in the stems and roots.

Its subcellular location is the plastid. The protein resides in the chloroplast. The polypeptide is 31 kDa ribonucleoprotein, chloroplastic (Nicotiana plumbaginifolia (Leadwort-leaved tobacco)).